A 363-amino-acid polypeptide reads, in one-letter code: Phosphoserine aminotransferase (363 aa).

L-glutamate is bound at residue Arg42. 4 residues coordinate pyridoxal 5'-phosphate: Trp105, Thr155, Asp175, and Gln198. Lys199 is modified (N6-(pyridoxal phosphate)lysine). 240–241 (NT) provides a ligand contact to pyridoxal 5'-phosphate.

It belongs to the class-V pyridoxal-phosphate-dependent aminotransferase family. SerC subfamily. As to quaternary structure, homodimer. Requires pyridoxal 5'-phosphate as cofactor.

The protein localises to the cytoplasm. It carries out the reaction O-phospho-L-serine + 2-oxoglutarate = 3-phosphooxypyruvate + L-glutamate. It catalyses the reaction 4-(phosphooxy)-L-threonine + 2-oxoglutarate = (R)-3-hydroxy-2-oxo-4-phosphooxybutanoate + L-glutamate. It functions in the pathway amino-acid biosynthesis; L-serine biosynthesis; L-serine from 3-phospho-D-glycerate: step 2/3. The protein operates within cofactor biosynthesis; pyridoxine 5'-phosphate biosynthesis; pyridoxine 5'-phosphate from D-erythrose 4-phosphate: step 3/5. Functionally, catalyzes the reversible conversion of 3-phosphohydroxypyruvate to phosphoserine and of 3-hydroxy-2-oxo-4-phosphonooxybutanoate to phosphohydroxythreonine. The polypeptide is Phosphoserine aminotransferase (Janthinobacterium sp. (strain Marseille) (Minibacterium massiliensis)).